Consider the following 530-residue polypeptide: Tyrosinase (530 aa).

Positions 1 to 18 (MLLAALCCLLWSFRTSTG) are cleaved as a signal peptide. Topologically, residues 19–473 (HFPRACASSK…IKPYLEQASR (455 aa)) are lumenal, melanosome. Asparagine 86, asparagine 111, and asparagine 161 each carry an N-linked (GlcNAc...) asparagine glycan. Cu cation contacts are provided by histidine 180, histidine 202, and histidine 211. 2 N-linked (GlcNAc...) asparagine glycosylation sites follow: asparagine 230 and asparagine 337. Cu cation-binding residues include histidine 363 and histidine 367. N-linked (GlcNAc...) asparagine glycosylation is present at asparagine 371. Residue histidine 390 coordinates Cu cation. The chain crosses the membrane as a helical span at residues 474 to 494 (IWPWLIGAAVVGCVVTAVLGG). Residues 495-530 (LTSLLCRRNRKQLHEEKQPLLMEKEDYHSLLYQTHL) are Cytoplasmic-facing.

It belongs to the tyrosinase family. As to quaternary structure, forms an OPN3-dependent complex with DCT in response to blue light in melanocytes. It depends on Cu(2+) as a cofactor. Glycosylated.

The protein resides in the melanosome membrane. The protein localises to the melanosome. The enzyme catalyses 2 L-dopa + O2 = 2 L-dopaquinone + 2 H2O. It carries out the reaction L-tyrosine + O2 = L-dopaquinone + H2O. It catalyses the reaction 2 5,6-dihydroxyindole-2-carboxylate + O2 = 2 indole-5,6-quinone-2-carboxylate + 2 H2O. This is a copper-containing oxidase that functions in the formation of pigments such as melanins and other polyphenolic compounds. Catalyzes the initial and rate limiting step in the cascade of reactions leading to melanin production from tyrosine. In addition to hydroxylating tyrosine to DOPA (3,4-dihydroxyphenylalanine), also catalyzes the oxidation of DOPA to DOPA-quinone, and possibly the oxidation of DHI (5,6-dihydroxyindole) to indole-5,6 quinone. This is Tyrosinase (TYR) from Canis lupus familiaris (Dog).